The chain runs to 336 residues: GTPase Obg (336 aa).

An Obg domain is found at 1-159 (MKFIDEATII…RRLQLELILL (159 aa)). One can recognise an OBG-type G domain in the interval 160 to 333 (ADVGLLGLPN…LCRDIMLFIN (174 aa)). GTP is bound by residues 166 to 173 (GLPNVGKS), 191 to 195 (FTTLV), 213 to 216 (DIPG), 283 to 286 (NKLD), and 314 to 316 (SAM). Residues Ser173 and Thr193 each coordinate Mg(2+).

The protein belongs to the TRAFAC class OBG-HflX-like GTPase superfamily. OBG GTPase family. Monomer. The cofactor is Mg(2+).

Its subcellular location is the cytoplasm. Its function is as follows. An essential GTPase which binds GTP, GDP and possibly (p)ppGpp with moderate affinity, with high nucleotide exchange rates and a fairly low GTP hydrolysis rate. Plays a role in control of the cell cycle, stress response, ribosome biogenesis and in those bacteria that undergo differentiation, in morphogenesis control. The chain is GTPase Obg from Baumannia cicadellinicola subsp. Homalodisca coagulata.